The primary structure comprises 231 residues: Floral homeotic protein PMADS 1 (231 aa).

One can recognise an MADS-box domain in the interval R3–I58. The K-box domain occupies Y84 to D174.

In terms of tissue distribution, predominantly expressed in petals and stamens, less in carpels and sepals.

Its subcellular location is the nucleus. In terms of biological role, transcription factor involved in the genetic control of flower development. Necessary for the normal development of petals. Absence of the PMADS1 protein causes transformation of petals into sepals. This Petunia hybrida (Petunia) protein is Floral homeotic protein PMADS 1 (PMADS1).